Here is a 617-residue protein sequence, read N- to C-terminus: RNA polymerase sigma factor RpoD (617 aa).

Residues 192-222 form a disordered region; it reads NITNDSNENEDENEDENEDEDENSIDPELAN. Positions 198-216 are enriched in acidic residues; the sequence is NENEDENEDENEDEDENSI. The sigma-70 factor domain-2 stretch occupies residues 383–453; the sequence is MVEANLRLVI…TRSIADQART (71 aa). The Interaction with polymerase core subunit RpoC motif lies at 407–410; that stretch reads DLIQ. A sigma-70 factor domain-3 region spans residues 462–538; it reads ETINKLNRIS…DTTLELPLDS (77 aa). The tract at residues 551-604 is sigma-70 factor domain-4; the sequence is VLSGLTAREAKVLRMRFGIDMNTDHTLEEVGKQFDVTRERIRQIEAKALRKLRH. The segment at residues 577–596 is a DNA-binding region (H-T-H motif); that stretch reads LEEVGKQFDVTRERIRQIEA.

This sequence belongs to the sigma-70 factor family. RpoD/SigA subfamily. As to quaternary structure, interacts transiently with the RNA polymerase catalytic core.

The protein resides in the cytoplasm. In terms of biological role, sigma factors are initiation factors that promote the attachment of RNA polymerase to specific initiation sites and are then released. This sigma factor is the primary sigma factor during exponential growth. The protein is RNA polymerase sigma factor RpoD of Buchnera aphidicola subsp. Schizaphis graminum (strain Sg).